Reading from the N-terminus, the 308-residue chain is MKNLDHIAASVDWEKESLPEYQDLIFLLFFALFFPVLRFILDRFVFEALAKRMIFGKKTVVNINGREERKKINKFKESAWKFVYFLSTELLALSVTCNEPWFTDSRYFWAGPGDVVWPNLKMKLKLKLLYMYAGGFYFYSIFATLYWETRRYDFAAQIIHHVTTVSLIVLSYVYGFARIGSVVLALHDGSDVFMEIAKMSKYSGFDLIADIFFSLFALVFTSLRIICYPFWIIRSTCYELLYVLDIQKERTTGIILYFVFNALLICLLVLHLFWFKIILRMVKNQILSRGHITDDVREDSESDDDHKD.

A run of 6 helical transmembrane segments spans residues 21-41 (YQDL…RFIL), 82-102 (FVYF…EPWF), 128-148 (LLYM…LYWE), 165-185 (VSLI…VVLA), 213-233 (FSLF…FWII), and 254-274 (IILY…HLFW). The region spanning 73 to 287 (NKFKESAWKF…ILRMVKNQIL (215 aa)) is the TLC domain.

The protein localises to the endoplasmic reticulum membrane. Functionally, mediates resistance to sphinganine-analog mycotoxins (SAMs) by restoring the sphingolipid biosynthesis. Could salvage the transport of GPI-anchored proteins from the endoplasmic reticulum to the Golgi apparatus in ceramides-depleted cells after SAM exposure. The sequence is that of Alternaria stem canker resistance protein 1 from Solanum lycopersicum (Tomato).